The sequence spans 606 residues: V-type proton ATPase catalytic subunit A (606 aa).

Ala2 is modified (N-acetylalanine). 240 to 247 (AFGCGKTV) is an ATP binding site.

Belongs to the ATPase alpha/beta chains family. In terms of assembly, V-ATPase is a heteromultimeric enzyme made up of two complexes: the ATP-hydrolytic V1 complex and the proton translocation V0 complex. The V1 complex consists of three catalytic AB heterodimers that form a heterohexamer, three peripheral stalks each consisting of EG heterodimers, one central rotor including subunits D and F, and the regulatory subunits C and H. The proton translocation complex V0 consists of the proton transport subunit a, a ring of proteolipid subunits c9c'', rotary subunit d, subunits e and f, and the accessory subunits vah-19/Ac45 and vah-20/PRR. As to expression, expressed in proximal but not distal germ cells.

It catalyses the reaction ATP + H2O + 4 H(+)(in) = ADP + phosphate + 5 H(+)(out). With respect to regulation, ATP hydrolysis occurs at the interface between the nucleotide-binding domains of subunits A and B. ATP hydrolysis triggers a conformational change in the subunits D and F, which induces a shift of subunit d. The c-ring is subsequently rotated and results in a continuous proton translocation across the membrane. Functionally, catalytic subunit of the V1 complex of vacuolar(H+)-ATPase (V-ATPase), a multisubunit enzyme composed of a peripheral complex (V1) that hydrolyzes ATP and a membrane integral complex (V0) that translocates protons. V-ATPase is responsible for acidifying and maintaining the pH of intracellular compartments and in some cell types, is targeted to the plasma membrane, where it is responsible for acidifying the extracellular environment. Required along with other vacuolar ATPase components for the removal of protein aggregates which form in immature oocytes in the distal gonad. This removal occurs as the oocytes mature and move to the proximal gonad, is triggered by the introduction of sperm through mating and occurs before fertilization. The introduction of sperm triggers V-ATPase accumulation in proximal oocytes and induces lysosomal acidification which leads to engulfing of protein aggregates by lysosomes and subsequent clearance of the aggregates. Lysosomal acidification also leads to changes in mitochondrial morphology and function. Mitochondria in distal immature oocytes are fragmented, produce high levels of reactive oxygen species (ROS) and have high membrane potential, indicative of metabolic inactivity. In contrast, mitochondria in proximal mature oocytes are tubular with lower ROS levels and membrane potential, indicative of an active metabolic state required for aggregate mobilization before clearance. Involved in receptor-mediated endocytosis. This chain is V-type proton ATPase catalytic subunit A, found in Caenorhabditis elegans.